A 202-amino-acid chain; its full sequence is ATP-dependent Clp protease proteolytic subunit (202 aa).

Catalysis depends on Ser106, which acts as the Nucleophile. His131 is an active-site residue.

This sequence belongs to the peptidase S14 family. Fourteen ClpP subunits assemble into 2 heptameric rings which stack back to back to give a disk-like structure with a central cavity, resembling the structure of eukaryotic proteasomes.

Its subcellular location is the cytoplasm. It carries out the reaction Hydrolysis of proteins to small peptides in the presence of ATP and magnesium. alpha-casein is the usual test substrate. In the absence of ATP, only oligopeptides shorter than five residues are hydrolyzed (such as succinyl-Leu-Tyr-|-NHMec, and Leu-Tyr-Leu-|-Tyr-Trp, in which cleavage of the -Tyr-|-Leu- and -Tyr-|-Trp bonds also occurs).. Cleaves peptides in various proteins in a process that requires ATP hydrolysis. Has a chymotrypsin-like activity. Plays a major role in the degradation of misfolded proteins. This is ATP-dependent Clp protease proteolytic subunit from Shewanella baltica (strain OS223).